An 827-amino-acid chain; its full sequence is Periplasmic nitrate reductase (827 aa).

The segment at residues 1 to 32 (MNLSRRDFMKANAALAAASVAGLIIPVKNVNA) is a signal peptide (tat-type signal). The region spanning 37–93 (ITWDKAVCRFCGTGCAVLVGTKDGRVVASQGDPDAEVNRGLNCIKGYFLPKIMYGKD) is the 4Fe-4S Mo/W bis-MGD-type domain. Positions 44, 47, 51, and 79 each coordinate [4Fe-4S] cluster. Residues K81, Q148, N173, C177, 210–217 (WGSNMAEM), 242–246 (STFEH), 261–263 (QSD), M372, Q376, N482, 508–509 (SD), K531, D558, and 717–726 (TGRILEHWHT) each bind Mo-bis(molybdopterin guanine dinucleotide). F793 is a binding site for substrate. Mo-bis(molybdopterin guanine dinucleotide) is bound by residues N801 and K818.

Belongs to the prokaryotic molybdopterin-containing oxidoreductase family. NasA/NapA/NarB subfamily. As to quaternary structure, component of the periplasmic nitrate reductase NapAB complex composed of NapA and NapB. The cofactor is [4Fe-4S] cluster. Mo-bis(molybdopterin guanine dinucleotide) serves as cofactor. In terms of processing, predicted to be exported by the Tat system. The position of the signal peptide cleavage has not been experimentally proven.

The protein resides in the periplasm. The enzyme catalyses 2 Fe(II)-[cytochrome] + nitrate + 2 H(+) = 2 Fe(III)-[cytochrome] + nitrite + H2O. Functionally, catalytic subunit of the periplasmic nitrate reductase complex NapAB. Receives electrons from NapB and catalyzes the reduction of nitrate to nitrite. The chain is Periplasmic nitrate reductase from Histophilus somni (strain 2336) (Haemophilus somnus).